Reading from the N-terminus, the 2944-residue chain is Collagen alpha-1(VII) chain (2944 aa).

Positions 1–16 (MTLRLLVAALCAGILA) are cleaved as a signal peptide. Residues 17–1253 (EAPRVRAQHR…PEPCPVYCPK (1237 aa)) are nonhelical region (NC1). One can recognise a VWFA 1 domain in the interval 38-211 (DIVFLLDGSS…SILRTLLPLV (174 aa)). Fibronectin type-III domains are found at residues 234–329 (APRD…TALE), 330–416 (GPEL…TDAS), 417–507 (VEQT…PELP), 510–597 (PVTD…EPET), 600–687 (AVPG…DPLG), 688–775 (PVRT…APEP), 778–866 (RVSR…PPEA), 869–957 (ALGT…SPRV), and 958–1051 (PSIE…CPRG). Residue Asn337 is glycosylated (N-linked (GlcNAc...) asparagine). Residues 632-651 (STGSGPESSQTLPPDSTATD) form a disordered region. Asn786 is a glycosylation site (N-linked (GlcNAc...) asparagine). The VWFA 2 domain maps to 1054-1229 (DVVFLPHATQ…PSLDQAVSGL (176 aa)). Residue Asn1109 is glycosylated (N-linked (GlcNAc...) asparagine). 2 consecutive short sequence motifs (cell attachment site) follow at residues 1170 to 1172 (RGD) and 1334 to 1336 (RGD). 3 disordered regions span residues 1239-1941 (TTQP…SVPN), 1963-2782 (WDES…EKGE), and 2837-2872 (SHAE…PWDS). The interrupted collagenous region stretch occupies residues 1254–1477 (GQKGEPGEMG…GPRGPPGAIG (224 aa)). The triple-helical region stretch occupies residues 1254 to 2784 (GQKGEPGEMG…GPRGEKGEAA (1531 aa)). Positions 1336 to 1346 (DPGERGPRGPK) are enriched in basic and acidic residues. A compositionally biased stretch (gly residues) spans 1355–1365 (VIGGEGPGLPG). Residues 1399-1408 (KGDKGDRGER) are compositionally biased toward basic and acidic residues. Pro residues predominate over residues 1429–1440 (PGSPGPQGPVGP). Low complexity predominate over residues 1574–1583 (RGPPGLVLPG). 3 stretches are compositionally biased toward basic and acidic residues: residues 1630-1642 (RGRD…KGDE), 1669-1683 (VGEK…EDGR), and 1715-1733 (AREK…RGPK). Positions 1786-1802 (KPGAAGPSGPNGAAGKA) are enriched in low complexity. The span at 1852-1877 (EDGRKGEKGDSGASGREGRDGPKGER) shows a compositional bias: basic and acidic residues. Over residues 1886-1897 (QGPPGLPGPVGP) the composition is skewed to pro residues. Residues 1898–1911 (PGQGFPGVPGGTGP) are compositionally biased toward gly residues. Basic and acidic residues predominate over residues 1974 to 1984 (PERRRGPKGDS). Positions 2008–2010 (RGD) match the Cell attachment site motif. Residues Pro2036 and Pro2039 each carry the 4-hydroxyproline modification. A compositionally biased stretch (gly residues) spans 2046 to 2055 (GRAGGVGEAG). Over residues 2056-2074 (RPGERGERGEKGERGEQGR) the composition is skewed to basic and acidic residues. Over residues 2078 to 2092 (PGLPGTPGPPGPPGP) the composition is skewed to pro residues. Pro2084, Pro2087, and Pro2090 each carry 4-hydroxyproline. The span at 2127–2143 (PKGDRGVPGIKGDRGEP) shows a compositional bias: basic and acidic residues. 4-hydroxyproline is present on residues Pro2167, Pro2176, Pro2185, and Pro2188. Composition is skewed to low complexity over residues 2191 to 2206 (PGLA…SGLK) and 2235 to 2250 (SGLV…PGQV). Over residues 2328–2346 (AKGDRGLPGPRGEKGEAGR) the composition is skewed to basic and acidic residues. The segment covering 2387 to 2406 (VKGDLGLPGLPGAPGVVGFP) has biased composition (low complexity). Residues 2438-2448 (PLGPPGPPGSV) show a composition bias toward pro residues. Composition is skewed to basic and acidic residues over residues 2471-2486 (RGER…DGRP) and 2534-2570 (AKGD…EPGD). Residues 2553 to 2555 (RGD) carry the Cell attachment site motif. Over residues 2573–2601 (SAGLPGLRGLLGPQGQPGAAGIPGDPGSP) the composition is skewed to low complexity. Lys2625 and Lys2631 each carry 5-hydroxylysine; alternate. Lys2625 and Lys2631 each carry an O-linked (Gal...) hydroxylysine; alternate glycan. 4-hydroxyproline is present on residues Pro2664, Pro2667, and Pro2673. Positions 2704 to 2713 (GTPGIGGFPG) are enriched in gly residues. Over residues 2749 to 2762 (GERVVGAPGVPGAP) the composition is skewed to low complexity. The interval 2785–2944 (LTEDDIRGFV…QSQGTGTAQD (160 aa)) is nonhelical region (NC2). A compositionally biased stretch (basic and acidic residues) spans 2837–2847 (SHAEEEERVPP). Positions 2848 to 2872 (EDDEYSEYSEYSVEEYQDPEAPWDS) are enriched in acidic residues. The BPTI/Kunitz inhibitor domain maps to 2872 to 2944 (SDDPCSLPLD…QSQGTGTAQD (73 aa)). 3 disulfide bridges follow: Cys2876-Cys2929, Cys2885-Cys2912, and Cys2904-Cys2925.

In terms of assembly, homotrimer. Interacts with MIA3/TANGO1; facilitating its loading into transport carriers and subsequent secretion. Prolines at the third position of the tripeptide repeating unit (G-X-Y) are hydroxylated in some or all of the chains.

The protein resides in the secreted. It localises to the extracellular space. The protein localises to the extracellular matrix. Its subcellular location is the basement membrane. In terms of biological role, stratified squamous epithelial basement membrane protein that forms anchoring fibrils which may contribute to epithelial basement membrane organization and adherence by interacting with extracellular matrix (ECM) proteins such as type IV collagen. The polypeptide is Collagen alpha-1(VII) chain (COL7A1) (Homo sapiens (Human)).